Consider the following 243-residue polypeptide: Glutathione S-transferase U14 (243 aa).

Residues 5 to 87 enclose the GST N-terminal domain; it reads DTVKLIGCSD…YLDEAWPSDP (83 aa). Residues 15–16, 44–45, 58–59, and 71–72 each bind glutathione; these read DP, EK, KT, and ES. In terms of domain architecture, GST C-terminal spans 93 to 220; it reads NAYDRASARF…MPTVEEVTEL (128 aa). Threonine 159 carries the post-translational modification Phosphothreonine.

Belongs to the GST superfamily. Tau family.

The protein resides in the cytoplasm. The protein localises to the cytosol. The enzyme catalyses RX + glutathione = an S-substituted glutathione + a halide anion + H(+). Functionally, may be involved in the conjugation of reduced glutathione to a wide number of exogenous and endogenous hydrophobic electrophiles and have a detoxification role against certain herbicides. In Arabidopsis thaliana (Mouse-ear cress), this protein is Glutathione S-transferase U14 (GSTU14).